The primary structure comprises 317 residues: Transaldolase 2 (317 aa).

The active-site Schiff-base intermediate with substrate is K132.

It belongs to the transaldolase family. Type 1 subfamily. Homodimer.

Its subcellular location is the cytoplasm. It catalyses the reaction D-sedoheptulose 7-phosphate + D-glyceraldehyde 3-phosphate = D-erythrose 4-phosphate + beta-D-fructose 6-phosphate. The protein operates within carbohydrate degradation; pentose phosphate pathway; D-glyceraldehyde 3-phosphate and beta-D-fructose 6-phosphate from D-ribose 5-phosphate and D-xylulose 5-phosphate (non-oxidative stage): step 2/3. Its function is as follows. Transaldolase is important for the balance of metabolites in the pentose-phosphate pathway. This Pectobacterium atrosepticum (strain SCRI 1043 / ATCC BAA-672) (Erwinia carotovora subsp. atroseptica) protein is Transaldolase 2.